The primary structure comprises 150 residues: 3-hydroxyacyl-[acyl-carrier-protein] dehydratase FabZ (150 aa).

Residue His54 is part of the active site.

The protein belongs to the thioester dehydratase family. FabZ subfamily.

The protein resides in the cytoplasm. It catalyses the reaction a (3R)-hydroxyacyl-[ACP] = a (2E)-enoyl-[ACP] + H2O. In terms of biological role, involved in unsaturated fatty acids biosynthesis. Catalyzes the dehydration of short chain beta-hydroxyacyl-ACPs and long chain saturated and unsaturated beta-hydroxyacyl-ACPs. The chain is 3-hydroxyacyl-[acyl-carrier-protein] dehydratase FabZ from Vibrio parahaemolyticus serotype O3:K6 (strain RIMD 2210633).